Reading from the N-terminus, the 684-residue chain is Phenoloxidase 1 (684 aa).

The propeptide at 1-50 (MSDKNKLLLLFDRPLETVIVPRGPDQEAFDVPVDLLSDRYKAIGVQVSNR) is removed by PPAF1. Asparagine 80 carries N-linked (GlcNAc...) asparagine glycosylation. Histidine 208, histidine 212, and histidine 237 together coordinate Cu cation. The Proton acceptor role is filled by glutamate 349. 2 N-linked (GlcNAc...) asparagine glycosylation sites follow: asparagine 352 and asparagine 356. Cu cation is bound by residues histidine 364, histidine 368, and histidine 404. N-linked (GlcNAc...) asparagine glycosylation is found at asparagine 486, asparagine 491, and asparagine 545. Cystine bridges form between cysteine 579/cysteine 621 and cysteine 581/cysteine 628.

It belongs to the tyrosinase family. As to quaternary structure, dimer. Might form a homodimer or a heterodimer with PPO1. Might interact with PPAF2 (via CLIP domain); the interaction might be required for PPO1 activity. The cofactor is Cu(2+). Propeptide cleaved by PPAF1. Hemocytes.

The protein localises to the secreted. Functionally, this is a copper-containing oxidase that functions in the formation of pigments such as melanins and other polyphenolic compounds. Catalyzes the oxidation of o-diphenols (N-acetyldopamine, 4-methylcatechol and dopamine). Cannot oxidize monophenols and p-phenols (L-tyrosine, tyramine, gentisic acid and hydroquinone). Binds to the surface of hemocytes and is involved in hemocyte melanization. Activation of the enzyme in response to bacterial lipopolysaccharides (LPS) suggests it may play a role in innate immunity. The protein is Phenoloxidase 1 of Holotrichia diomphalia (Korean black chafer).